Here is a 1166-residue protein sequence, read N- to C-terminus: Tectonin beta-propeller repeat-containing protein 1 (1166 aa).

4 TECPR repeats span residues 209–240 (LSVW…SLVE), 254–285 (DLIW…SMVE), 301–332 (SVVW…IEMV), and 344–376 (DQVW…KAIV). A phosphoserine mark is found at Ser-386, Ser-388, Ser-391, Ser-413, and Ser-418. The tract at residues 404–496 (RGSGTESAPS…PAELPWTNID (93 aa)) is disordered. Residues 407–416 (GTESAPSDTD) show a composition bias toward polar residues. Over residues 451 to 462 (TSGNTDHSTENA) the composition is skewed to polar residues. Basic and acidic residues predominate over residues 466-481 (EGKEKAPETSRSDECR). The region spanning 616 to 722 (KTGALQWWCD…WLALLSLSCC (107 aa)) is the PH domain. The TECPR 5 repeat unit spans residues 734–761 (QAIWSVTCKGDIFVSEPSPDLEARERLL). Residue Ser-943 is modified to Phosphoserine. TECPR repeat units follow at residues 958-989 (VALW…LHVG), 1003-1034 (YQVW…YHIP), 1049-1080 (TSVY…EHVS), and 1092-1132 (DQVW…DYGI).

This sequence belongs to the TECPR1 family. As to quaternary structure, interacts with ATG5; the interaction is direct. Interacts with WIPI2. Interacts with the ATG5-ATG12 conjugate, the interaction is however mutually exclusive with ATG16, since it does not interact with ATG12-ATG5-ATG16 complex.

Its subcellular location is the cytoplasmic vesicle. It is found in the autophagosome membrane. It localises to the lysosome membrane. Tethering factor involved in autophagy. Involved in autophagosome maturation by promoting the autophagosome fusion with lysosomes: acts by associating with both the ATG5-ATG12 conjugate and phosphatidylinositol-3-phosphate (PtdIns(3)P) present at the surface of autophagosomes. Also involved in selective autophagy against bacterial pathogens, by being required for phagophore/preautophagosomal structure biogenesis and maturation. This chain is Tectonin beta-propeller repeat-containing protein 1 (Tecpr1), found in Mus musculus (Mouse).